Here is a 244-residue protein sequence, read N- to C-terminus: Ubiquinone biosynthesis O-methyltransferase (244 aa).

S-adenosyl-L-methionine is bound by residues arginine 36, glycine 60, aspartate 81, and leucine 123.

Belongs to the methyltransferase superfamily. UbiG/COQ3 family.

It carries out the reaction a 3-demethylubiquinol + S-adenosyl-L-methionine = a ubiquinol + S-adenosyl-L-homocysteine + H(+). The catalysed reaction is a 3-(all-trans-polyprenyl)benzene-1,2-diol + S-adenosyl-L-methionine = a 2-methoxy-6-(all-trans-polyprenyl)phenol + S-adenosyl-L-homocysteine + H(+). It participates in cofactor biosynthesis; ubiquinone biosynthesis. O-methyltransferase that catalyzes the 2 O-methylation steps in the ubiquinone biosynthetic pathway. This chain is Ubiquinone biosynthesis O-methyltransferase, found in Rickettsia felis (strain ATCC VR-1525 / URRWXCal2) (Rickettsia azadi).